We begin with the raw amino-acid sequence, 423 residues long: NADH-quinone oxidoreductase subunit F (423 aa).

Gly54–Gly63 is an NAD(+) binding site. Residue Gly166–Ser213 coordinates FMN. The [4Fe-4S] cluster site is built by Cys344, Cys347, Cys350, and Cys390.

Belongs to the complex I 51 kDa subunit family. The cofactor is FMN. Requires [4Fe-4S] cluster as cofactor.

It catalyses the reaction a quinone + NADH + 5 H(+)(in) = a quinol + NAD(+) + 4 H(+)(out). Its function is as follows. NDH-1 shuttles electrons from NADH, via FMN and iron-sulfur (Fe-S) centers, to quinones in the respiratory chain. Couples the redox reaction to proton translocation (for every two electrons transferred, four hydrogen ions are translocated across the cytoplasmic membrane), and thus conserves the redox energy in a proton gradient. This chain is NADH-quinone oxidoreductase subunit F (nuoF), found in Rickettsia akari (strain Hartford).